The sequence spans 959 residues: Leucine--tRNA ligase (959 aa).

Residues Pro-39–Ser-49 carry the 'HIGH' region motif. The 'KMSKS' region motif lies at Lys-637–Ser-641. An ATP-binding site is contributed by Lys-640. Residues Thr-933–Gly-959 form a disordered region.

Belongs to the class-I aminoacyl-tRNA synthetase family.

The protein localises to the cytoplasm. It carries out the reaction tRNA(Leu) + L-leucine + ATP = L-leucyl-tRNA(Leu) + AMP + diphosphate. In Aeropyrum pernix (strain ATCC 700893 / DSM 11879 / JCM 9820 / NBRC 100138 / K1), this protein is Leucine--tRNA ligase.